Here is a 63-residue protein sequence, read N- to C-terminus: UPF0391 membrane protein lpg2415 (63 aa).

The next 2 helical transmembrane spans lie at 4–24 (WALIFLIVAIVAGLFGFRGVA) and 33–53 (VLFFLFIVMFIVLLVFSLLGG).

It belongs to the UPF0391 family.

The protein resides in the cell membrane. This chain is UPF0391 membrane protein lpg2415, found in Legionella pneumophila subsp. pneumophila (strain Philadelphia 1 / ATCC 33152 / DSM 7513).